We begin with the raw amino-acid sequence, 165 residues long: MDIAHDLQSIGAQEQALVFPHFDPARAWALGNRMHALATARGHAIAIDIVTFGQPLFYAALAGATPDNADWVRRKRNVVAHFRRSSYAIGLRMQQAGASLADKHGLPISDYSPHGGSFPLTVAGAGVIGSITASGLPQRADHEFVVEALCAELGQDYAALALARS.

This sequence belongs to the UPF0303 family.

The chain is UPF0303 protein Bamb_1459 from Burkholderia ambifaria (strain ATCC BAA-244 / DSM 16087 / CCUG 44356 / LMG 19182 / AMMD) (Burkholderia cepacia (strain AMMD)).